The chain runs to 1106 residues: MTMVTRVIMTDDDSQSLCFLCFLLFFFITAIAVAGDSLDSDREVLLSLKSYLESRNPQNRGLYTEWKMENQDVVCQWPGIICTPQRSRVTGINLTDSTISGPLFKNFSALTELTYLDLSRNTIEGEIPDDLSRCHNLKHLNLSHNILEGELSLPGLSNLEVLDLSLNRITGDIQSSFPLFCNSLVVANLSTNNFTGRIDDIFNGCRNLKYVDFSSNRFSGEVWTGFGRLVEFSVADNHLSGNISASMFRGNCTLQMLDLSGNAFGGEFPGQVSNCQNLNVLNLWGNKFTGNIPAEIGSISSLKGLYLGNNTFSRDIPETLLNLTNLVFLDLSRNKFGGDIQEIFGRFTQVKYLVLHANSYVGGINSSNILKLPNLSRLDLGYNNFSGQLPTEISQIQSLKFLILAYNNFSGDIPQEYGNMPGLQALDLSFNKLTGSIPASFGKLTSLLWLMLANNSLSGEIPREIGNCTSLLWFNVANNQLSGRFHPELTRMGSNPSPTFEVNRQNKDKIIAGSGECLAMKRWIPAEFPPFNFVYAILTKKSCRSLWDHVLKGYGLFPVCSAGSTVRTLKISAYLQLSGNKFSGEIPASISQMDRLSTLHLGFNEFEGKLPPEIGQLPLAFLNLTRNNFSGEIPQEIGNLKCLQNLDLSFNNFSGNFPTSLNDLNELSKFNISYNPFISGAIPTTGQVATFDKDSFLGNPLLRFPSFFNQSGNNTRKISNQVLGNRPRTLLLIWISLALALAFIACLVVSGIVLMVVKASREAEIDLLDGSKTRHDMTSSSGGSSPWLSGKIKVIRLDKSTFTYADILKATSNFSEERVVGRGGYGTVYRGVLPDGREVAVKKLQREGTEAEKEFRAEMEVLSANAFGDWAHPNLVRLYGWCLDGSEKILVHEYMGGGSLEELITDKTKLQWKKRIDIATDVARGLVFLHHECYPSIVHRDVKASNVLLDKHGNARVTDFGLARLLNVGDSHVSTVIAGTIGYVAPEYGQTWQATTRGDVYSYGVLTMELATGRRAVDGGEECLVEWARRVMTGNMTAKGSPITLSGTKPGNGAEQMTELLKIGVKCTADHPQARPNMKEVLAMLVKISGKAELFNGLSSQGYIEM.

A signal peptide spans 1–34 (MTMVTRVIMTDDDSQSLCFLCFLLFFFITAIAVA). The Extracellular segment spans residues 35–736 (GDSLDSDREV…PRTLLLIWIS (702 aa)). LRR repeat units lie at residues 86–109 (RSRV…NFSA), 110–134 (LTEL…LSRC), 136–156 (NLKH…LPGL), 157–182 (SNLE…LFCN), 184–204 (LVVA…IFNG), 205–226 (CRNL…WTGF), and 227–250 (GRLV…MFRG). Residues asparagine 93 and asparagine 106 are each glycosylated (N-linked (GlcNAc...) asparagine). Asparagine 141 carries N-linked (GlcNAc...) asparagine glycosylation. Residues asparagine 188 and asparagine 193 are each glycosylated (N-linked (GlcNAc...) asparagine). Residues asparagine 242 and asparagine 251 are each glycosylated (N-linked (GlcNAc...) asparagine). 15 LRR repeats span residues 252–275 (CTLQ…VSNC), 276–299 (QNLN…IGSI), 300–323 (SSLK…LLNL), 325–346 (NLVF…IFGR), 348–371 (TQVK…NILK), 372–396 (LPNL…ISQI), 398–419 (SLKF…EYGN), 420–443 (MPGL…SFGK), 445–468 (TSLL…IGNC), 470–492 (SLLW…LTRM), 566–593 (VRTL…ISQM), 594–617 (DRLS…IGQL), 619–640 (LAFL…IGNL), 641–664 (KCLQ…LNDL), and 666–690 (ELSK…QVAT). N-linked (GlcNAc...) asparagine glycosylation is found at asparagine 309 and asparagine 322. N-linked (GlcNAc...) asparagine glycans are attached at residues asparagine 365, asparagine 374, asparagine 384, and asparagine 408. 2 N-linked (GlcNAc...) asparagine glycosylation sites follow: asparagine 454 and asparagine 467. 6 N-linked (GlcNAc...) asparagine glycosylation sites follow: asparagine 623, asparagine 628, asparagine 652, asparagine 671, asparagine 709, and asparagine 713. The helical transmembrane segment at 737-757 (LALALAFIACLVVSGIVLMVV) threads the bilayer. At 758–1106 (KASREAEIDL…GLSSQGYIEM (349 aa)) the chain is on the cytoplasmic side. 2 positions are modified to phosphothreonine: threonine 803 and threonine 811. The Protein kinase domain occupies 814–1095 (FSEERVVGRG…VKISGKAELF (282 aa)). ATP is bound by residues 820-828 (VGRGGYGTV) and lysine 842. Aspartate 941 acts as the Proton acceptor in catalysis. Phosphotyrosine is present on tyrosine 983. The residue at position 991 (threonine 991) is a Phosphothreonine.

It belongs to the protein kinase superfamily. Ser/Thr protein kinase family.

Its subcellular location is the mitochondrion membrane. The catalysed reaction is L-seryl-[protein] + ATP = O-phospho-L-seryl-[protein] + ADP + H(+). The enzyme catalyses L-threonyl-[protein] + ATP = O-phospho-L-threonyl-[protein] + ADP + H(+). In Arabidopsis thaliana (Mouse-ear cress), this protein is Probable LRR receptor-like serine/threonine-protein kinase At1g74360.